The sequence spans 316 residues: Beta-ketoacyl-[acyl-carrier-protein] synthase III (316 aa).

Catalysis depends on residues Cys-112 and His-243. Residues 244 to 248 (QANLR) are ACP-binding. Asn-273 is a catalytic residue.

It belongs to the thiolase-like superfamily. FabH family. As to quaternary structure, homodimer.

The protein resides in the cytoplasm. It carries out the reaction malonyl-[ACP] + acetyl-CoA + H(+) = 3-oxobutanoyl-[ACP] + CO2 + CoA. The protein operates within lipid metabolism; fatty acid biosynthesis. Catalyzes the condensation reaction of fatty acid synthesis by the addition to an acyl acceptor of two carbons from malonyl-ACP. Catalyzes the first condensation reaction which initiates fatty acid synthesis and may therefore play a role in governing the total rate of fatty acid production. Possesses both acetoacetyl-ACP synthase and acetyl transacylase activities. Its substrate specificity determines the biosynthesis of branched-chain and/or straight-chain of fatty acids. In Yersinia pestis (strain Pestoides F), this protein is Beta-ketoacyl-[acyl-carrier-protein] synthase III.